A 175-amino-acid polypeptide reads, in one-letter code: uncharacterized protein (175 aa).

The Extracellular segment spans residues Met1–Glu2. The chain crosses the membrane as a helical span at residues Ser3–Gly23. The Cytoplasmic segment spans residues Ser24–Arg151. The interval Ser26–Ile88 is disordered. The span at Phe59–Pro78 shows a compositional bias: polar residues. A helical membrane pass occupies residues Val152–Glu172. Over Ala173–Arg175 the chain is Extracellular.

The protein resides in the membrane. This is an uncharacterized protein from Saccharomyces cerevisiae (strain ATCC 204508 / S288c) (Baker's yeast).